Consider the following 470-residue polypeptide: Cysteine--tRNA ligase (470 aa).

Position 31 (Cys31) interacts with Zn(2+). Positions 33-43 (PTVYDYVHIGH) match the 'HIGH' region motif. Residues Cys209, His234, and Glu238 each coordinate Zn(2+). The 'KMSKS' region motif lies at 266 to 270 (KMSKS). Lys269 is an ATP binding site.

It belongs to the class-I aminoacyl-tRNA synthetase family. The cofactor is Zn(2+).

Its subcellular location is the cytoplasm. It catalyses the reaction tRNA(Cys) + L-cysteine + ATP = L-cysteinyl-tRNA(Cys) + AMP + diphosphate. The sequence is that of Cysteine--tRNA ligase from Saccharolobus solfataricus (strain ATCC 35092 / DSM 1617 / JCM 11322 / P2) (Sulfolobus solfataricus).